The following is a 267-amino-acid chain: Undecaprenyl-diphosphatase (267 aa).

The next 8 membrane-spanning stretches (helical) occupy residues 1–21, 39–59, 83–103, 111–131, 149–169, 189–209, 218–238, and 246–266; these read MTYF…FLPI, QGLA…VIYF, SNLA…GLLF, LRSA…LWWV, ALFL…RSGI, FLMS…KLAM, LLST…HFFL, and MMPF…WLAL.

It belongs to the UppP family.

The protein resides in the cell inner membrane. It catalyses the reaction di-trans,octa-cis-undecaprenyl diphosphate + H2O = di-trans,octa-cis-undecaprenyl phosphate + phosphate + H(+). Its function is as follows. Catalyzes the dephosphorylation of undecaprenyl diphosphate (UPP). Confers resistance to bacitracin. The polypeptide is Undecaprenyl-diphosphatase (Aliivibrio fischeri (strain MJ11) (Vibrio fischeri)).